A 279-amino-acid polypeptide reads, in one-letter code: Eukaryotic translation initiation factor 3 subunit G (279 aa).

Disordered stretches follow at residues 1 to 26 (MSTG…IANP), 66 to 115 (RKNW…KAHE), and 152 to 171 (TPSG…AAGA). Position 78 is a phosphoserine (Ser78). The segment covering 102-115 (KQDEKKEEEDKAHE) has biased composition (basic and acidic residues). Positions 152-163 (TPSGTTPEPTSE) are enriched in low complexity. In terms of domain architecture, RRM spans 197–276 (TTLKVSQLNS…LILHLEWSKK (80 aa)).

This sequence belongs to the eIF-3 subunit G family. Component of the eukaryotic translation initiation factor 3 (eIF-3) complex.

It is found in the cytoplasm. RNA-binding component of the eukaryotic translation initiation factor 3 (eIF-3) complex, which is involved in protein synthesis of a specialized repertoire of mRNAs and, together with other initiation factors, stimulates binding of mRNA and methionyl-tRNAi to the 40S ribosome. The eIF-3 complex specifically targets and initiates translation of a subset of mRNAs involved in cell proliferation. This subunit can bind 18S rRNA. The chain is Eukaryotic translation initiation factor 3 subunit G from Candida albicans (strain SC5314 / ATCC MYA-2876) (Yeast).